A 31-amino-acid polypeptide reads, in one-letter code: Cytochrome b6-f complex subunit 6 (31 aa).

A helical membrane pass occupies residues 5–25 (ISYLGILVGALLFVTITFLTL).

This sequence belongs to the PetL family. As to quaternary structure, the 4 large subunits of the cytochrome b6-f complex are cytochrome b6, subunit IV (17 kDa polypeptide, PetD), cytochrome f and the Rieske protein, while the 4 small subunits are PetG, PetL, PetM and PetN. The complex functions as a dimer.

It is found in the plastid. It localises to the chloroplast thylakoid membrane. Functionally, component of the cytochrome b6-f complex, which mediates electron transfer between photosystem II (PSII) and photosystem I (PSI), cyclic electron flow around PSI, and state transitions. PetL is important for photoautotrophic growth as well as for electron transfer efficiency and stability of the cytochrome b6-f complex. The polypeptide is Cytochrome b6-f complex subunit 6 (Chlorokybus atmophyticus (Soil alga)).